A 61-amino-acid chain; its full sequence is MLKYAIIFAVISLIAGALGFGGVAAGAAGIAKILFGLFLILAVIFVVLAALGVGAVRKGMK.

The next 2 helical transmembrane spans lie at 5-25 and 33-53; these read AIIFAVISLIAGALGFGGVAA and ILFGLFLILAVIFVVLAALGV.

It belongs to the UPF0391 family.

The protein resides in the cell membrane. The chain is UPF0391 membrane protein Bpro_0066 from Polaromonas sp. (strain JS666 / ATCC BAA-500).